Here is a 445-residue protein sequence, read N- to C-terminus: C-terminal-binding protein 2 (445 aa).

Arg22 carries the asymmetric dimethylarginine modification. NAD(+) is bound by residues Ser106, 186–191, Asp210, 243–249, 270–272, and Asp296; these read IGFGRT, CNLNEHN, and AAR. The active site involves Arg272. Glu301 is an active-site residue. The active-site Proton donor is the His321. 321-324 contributes to the NAD(+) binding site; sequence HTAW. The segment at 414 to 445 is disordered; sequence THNLPTVAHPSQAPSPNQPTKHGDNREHPNEQ. The residue at position 428 (Ser428) is a Phosphoserine. Over residues 434 to 445 the composition is skewed to basic and acidic residues; that stretch reads KHGDNREHPNEQ.

The protein belongs to the D-isomer specific 2-hydroxyacid dehydrogenase family. Can form homodimers or heterodimers of CTBP1 and CTBP2. Interacts with HIPK2 and ZNF217. Interacts with PRDM16; represses white adipose tissue (WAT)-specific genes expression. Interacts with PNN, NRIP1 and WIZ. Interacts with MCRIP1. As to quaternary structure, (Microbial infection) Interacts with human adenovirus 5 E1A protein; this interaction seems to potentiate viral replication. In terms of tissue distribution, ubiquitous. Highest levels in heart, skeletal muscle, and pancreas.

It localises to the nucleus. Its subcellular location is the synapse. Its function is as follows. Corepressor targeting diverse transcription regulators. Functions in brown adipose tissue (BAT) differentiation. In terms of biological role, isoform 2 probably acts as a scaffold for specialized synapses. The protein is C-terminal-binding protein 2 (CTBP2) of Homo sapiens (Human).